Here is a 228-residue protein sequence, read N- to C-terminus: Phosphatidate cytidylyltransferase (228 aa).

The next 6 helical transmembrane spans lie at 31–51, 65–85, 93–113, 131–151, 165–185, and 206–226; these read FVIA…LVGL, INYL…LIFL, LVIM…MIGG, WTGL…VSLI, IYLF…DLFI, and GVLD…CINI.

It belongs to the CDS family.

The protein localises to the cell membrane. It catalyses the reaction a 1,2-diacyl-sn-glycero-3-phosphate + CTP + H(+) = a CDP-1,2-diacyl-sn-glycerol + diphosphate. The protein operates within phospholipid metabolism; CDP-diacylglycerol biosynthesis; CDP-diacylglycerol from sn-glycerol 3-phosphate: step 3/3. The sequence is that of Phosphatidate cytidylyltransferase (cdsA) from Rickettsia prowazekii (strain Madrid E).